A 167-amino-acid polypeptide reads, in one-letter code: T-cell surface glycoprotein CD3 delta chain (167 aa).

The signal sequence occupies residues 1–21 (MEHSRCLSCLILAALLSQVNP). Residues 22-100 (RALEVLEAED…NCVELDSATL (79 aa)) are Extracellular-facing. Cysteine 37 and cysteine 73 are disulfide-bonded. 2 N-linked (GlcNAc...) asparagine glycosylation sites follow: asparagine 38 and asparagine 55. A helical membrane pass occupies residues 101-121 (AGLIITDIIATVLLALGVYCF). Residues 122 to 167 (AGHETGRFSRAADTQVLMGNDQLYQPLRERNDAQYSRLGDKWARNK) are Cytoplasmic-facing. Residues 134–162 (DTQVLMGNDQLYQPLRERNDAQYSRLGDK) enclose the ITAM domain. A phosphotyrosine mark is found at tyrosine 145 and tyrosine 156.

The TCR-CD3 complex is composed of a CD3D/CD3E and a CD3G/CD3E heterodimers that preferentially associate with TCRalpha and TCRbeta, respectively, to form TCRalpha/CD3E/CD3G and TCRbeta/CD3G/CD3E trimers. In turn, the hexamer interacts with CD3Z homodimer to form the TCR-CD3 complex. Alternatively, TCRalpha and TCRbeta can be replaced by TCRgamma and TCRdelta. Interacts with coreceptors CD4 and CD8. In terms of processing, phosphorylated on Tyr residues after T-cell receptor triggering by LCK in association with CD4/CD8. As to expression, CD3D is mostly present on T-lymphocytes with its TCR-CD3 partners. Present also in fetal NK-cells.

It is found in the cell membrane. Functionally, part of the TCR-CD3 complex present on T-lymphocyte cell surface that plays an essential role in adaptive immune response. When antigen presenting cells (APCs) activate T-cell receptor (TCR), TCR-mediated signals are transmitted across the cell membrane by the CD3 chains CD3D, CD3E, CD3G and CD3Z. All CD3 chains contain immunoreceptor tyrosine-based activation motifs (ITAMs) in their cytoplasmic domain. Upon TCR engagement, these motifs become phosphorylated by Src family protein tyrosine kinases LCK and FYN, resulting in the activation of downstream signaling pathways. In addition of this role of signal transduction in T-cell activation, CD3D plays an essential role in thymocyte differentiation. Indeed, participates in correct intracellular TCR-CD3 complex assembly and surface expression. In absence of a functional TCR-CD3 complex, thymocytes are unable to differentiate properly. Interacts with CD4 and CD8 and thus serves to establish a functional link between the TCR and coreceptors CD4 and CD8, which is needed for activation and positive selection of CD4 or CD8 T-cells. The chain is T-cell surface glycoprotein CD3 delta chain (CD3D) from Ovis aries (Sheep).